The primary structure comprises 430 residues: Dihydroorotase (430 aa).

His-57 and His-59 together coordinate Zn(2+). Substrate is bound by residues 59-61 (HLR) and Asn-91. Positions 151, 178, and 231 each coordinate Zn(2+). Asn-277 serves as a coordination point for substrate. Residue Asp-304 coordinates Zn(2+). The active site involves Asp-304. Substrate-binding positions include His-308 and 322–323 (PG).

The protein belongs to the metallo-dependent hydrolases superfamily. DHOase family. Class I DHOase subfamily. The cofactor is Zn(2+).

The catalysed reaction is (S)-dihydroorotate + H2O = N-carbamoyl-L-aspartate + H(+). The protein operates within pyrimidine metabolism; UMP biosynthesis via de novo pathway; (S)-dihydroorotate from bicarbonate: step 3/3. Its function is as follows. Catalyzes the reversible cyclization of carbamoyl aspartate to dihydroorotate. The chain is Dihydroorotase from Mycobacterium tuberculosis (strain ATCC 25618 / H37Rv).